The chain runs to 230 residues: Androgen-dependent TFPI-regulating protein (230 aa).

Topologically, residues 1–7 (MTKTTTC) are cytoplasmic. A helical transmembrane segment spans residues 8–28 (VYHFLVLNWYIFLNYHIPQIG). Residues 29–45 (RNEEKLREFHDGGRSKY) are Extracellular-facing. Residues 46–66 (LTLLNLLLQAIFFGVACLDDV) form a helical membrane-spanning segment. Topologically, residues 67–85 (LKRVIGRKDIKFVTSFRDL) are cytoplasmic. A helical transmembrane segment spans residues 86–106 (LFTTMAFPISTFVFLVFWTLF). Residues 107 to 120 (HYDRSLVYPKGLDD) are Extracellular-facing. A helical membrane pass occupies residues 121 to 141 (FFPAWVNHAMHTSIFPFSLFE). Residues 142-154 (TILRPHNYPSKKL) lie on the Cytoplasmic side of the membrane. The helical transmembrane segment at 155–175 (GLTLLGAFNFAYIIRILWRYV) threads the bilayer. Over 176–190 (QTGNWVYPVFDSLSP) the chain is Extracellular. Residues 191 to 211 (LGIIIFFSAAYILVAGIYLFG) form a helical membrane-spanning segment. Residues 212–230 (EKINHWKWGAIAKPQMKKN) are Cytoplasmic-facing.

Belongs to the AIG1 family.

Its subcellular location is the cell membrane. The enzyme catalyses 9-hexadecanoyloxy-octadecanoate + H2O = 9-hydroxy-octadecanoate + hexadecanoate + H(+). It catalyses the reaction 12-hexadecanoyloxy-octadecanoate + H2O = 12-hydroxyoctadecanoate + hexadecanoate + H(+). It carries out the reaction 9-(9Z-hexadecenoyloxy)-octadecanoate + H2O = (9Z)-hexadecenoate + 9-hydroxy-octadecanoate + H(+). The catalysed reaction is 12-(9Z-hexadecenoyloxy)-octadecanoate + H2O = 12-hydroxyoctadecanoate + (9Z)-hexadecenoate + H(+). The enzyme catalyses 13-(9Z-hexadecenoyloxy)-octadecanoate + H2O = 13-hydroxy-octadecanoate + (9Z)-hexadecenoate + H(+). It catalyses the reaction 9-octadecanoyloxy-octadecanoate + H2O = 9-hydroxy-octadecanoate + octadecanoate + H(+). It carries out the reaction 12-octadecanoyloxy-octadecanoate + H2O = 12-hydroxyoctadecanoate + octadecanoate + H(+). The catalysed reaction is 13-octadecanoyloxy-octadecanoate + H2O = 13-hydroxy-octadecanoate + octadecanoate + H(+). The enzyme catalyses 9-(9Z-octadecenoyloxy)-octadecanoate + H2O = 9-hydroxy-octadecanoate + (9Z)-octadecenoate + H(+). It catalyses the reaction 12-(9Z-octadecenoyloxy)-octadecanoate + H2O = 12-hydroxyoctadecanoate + (9Z)-octadecenoate + H(+). It carries out the reaction 13-(9Z-octadecenoyloxy)-octadecanoate + H2O = 13-hydroxy-octadecanoate + (9Z)-octadecenoate + H(+). The catalysed reaction is 5-(9Z-octadecenoyloxy)-octadecanoate + H2O = 5-hydroxy-octadecanoate + (9Z)-octadecenoate + H(+). In terms of biological role, hydrolyzes bioactive fatty-acid esters of hydroxy-fatty acids (FAHFAs), but not other major classes of lipids. Shows a preference for FAHFAs with branching distal from the carboxylate head group of the lipids. Regulates the expression and the cell-associated anticoagulant activity of the inhibitor TFPI in endothelial cells (in vitro). The protein is Androgen-dependent TFPI-regulating protein (Adtrp) of Mus musculus (Mouse).